We begin with the raw amino-acid sequence, 85 residues long: Beta-insect depressant toxin Lqh-dprIT3e (85 aa).

The signal sequence occupies residues 1–21 (MKLLLLLTISASMLIEGLVNA). In terms of domain architecture, LCN-type CS-alpha/beta spans 22 to 82 (DGYIRGGDGC…EWDYETDTCG (61 aa)). 4 disulfides stabilise this stretch: Cys-31–Cys-81, Cys-35–Cys-56, Cys-42–Cys-63, and Cys-46–Cys-65. Glycine amide is present on Gly-82.

Belongs to the long (4 C-C) scorpion toxin superfamily. Sodium channel inhibitor family. Beta subfamily. Expressed by the venom gland.

Its subcellular location is the secreted. Depressant insect beta-toxins cause a transient contraction paralysis followed by a slow flaccid paralysis. They bind voltage-independently at site-4 of sodium channels (Nav) and block action potentials, primarily by depolarizing the axonal membrane and suppressing the sodium current. This depressant toxin is active only on insects. It is found in a relatively small amount in the venom. The polypeptide is Beta-insect depressant toxin Lqh-dprIT3e (Leiurus hebraeus (Hebrew deathstalker scorpion)).